The primary structure comprises 171 residues: Der GTPase-activating protein YihI (171 aa).

Disordered stretches follow at residues 1–99 and 145–171; these read MKKP…QAEL and LSYD…RGGN. Basic and acidic residues predominate over residues 20–30; sequence TREELNQEARD. Positions 31 to 40 are enriched in basic residues; that stretch reads RKRLKKHRGH. Positions 147 to 160 are enriched in acidic residues; the sequence is YDDDDEDDEEDEKQ.

The protein belongs to the YihI family. As to quaternary structure, interacts with Der.

In terms of biological role, a GTPase-activating protein (GAP) that modifies Der/EngA GTPase function. May play a role in ribosome biogenesis. This chain is Der GTPase-activating protein YihI, found in Salmonella choleraesuis (strain SC-B67).